The sequence spans 210 residues: Proteasome subunit beta (210 aa).

The propeptide at 1–10 (MKELDQLTKG) is removed in mature form; by autocatalysis. Catalysis depends on T11, which acts as the Nucleophile.

The protein belongs to the peptidase T1B family. In terms of assembly, the 20S proteasome core is composed of 14 alpha and 14 beta subunits that assemble into four stacked heptameric rings, resulting in a barrel-shaped structure. The two inner rings, each composed of seven catalytic beta subunits, are sandwiched by two outer rings, each composed of seven alpha subunits. The catalytic chamber with the active sites is on the inside of the barrel. Has a gated structure, the ends of the cylinder being occluded by the N-termini of the alpha-subunits. Is capped at one or both ends by the proteasome regulatory ATPase, PAN.

The protein resides in the cytoplasm. The enzyme catalyses Cleavage of peptide bonds with very broad specificity.. Its activity is regulated as follows. The formation of the proteasomal ATPase PAN-20S proteasome complex, via the docking of the C-termini of PAN into the intersubunit pockets in the alpha-rings, triggers opening of the gate for substrate entry. Interconversion between the open-gate and close-gate conformations leads to a dynamic regulation of the 20S proteasome proteolysis activity. Component of the proteasome core, a large protease complex with broad specificity involved in protein degradation. The protein is Proteasome subunit beta of Methanopyrus kandleri (strain AV19 / DSM 6324 / JCM 9639 / NBRC 100938).